Consider the following 105-residue polypeptide: Pyrimidine/purine nucleoside phosphorylase (105 aa).

It belongs to the nucleoside phosphorylase PpnP family.

It catalyses the reaction a purine D-ribonucleoside + phosphate = a purine nucleobase + alpha-D-ribose 1-phosphate. The catalysed reaction is adenosine + phosphate = alpha-D-ribose 1-phosphate + adenine. It carries out the reaction cytidine + phosphate = cytosine + alpha-D-ribose 1-phosphate. The enzyme catalyses guanosine + phosphate = alpha-D-ribose 1-phosphate + guanine. It catalyses the reaction inosine + phosphate = alpha-D-ribose 1-phosphate + hypoxanthine. The catalysed reaction is thymidine + phosphate = 2-deoxy-alpha-D-ribose 1-phosphate + thymine. It carries out the reaction uridine + phosphate = alpha-D-ribose 1-phosphate + uracil. The enzyme catalyses xanthosine + phosphate = alpha-D-ribose 1-phosphate + xanthine. Its function is as follows. Catalyzes the phosphorolysis of diverse nucleosides, yielding D-ribose 1-phosphate and the respective free bases. Can use uridine, adenosine, guanosine, cytidine, thymidine, inosine and xanthosine as substrates. Also catalyzes the reverse reactions. This Clostridioides difficile (strain 630) (Peptoclostridium difficile) protein is Pyrimidine/purine nucleoside phosphorylase.